Consider the following 250-residue polypeptide: Ribosomal RNA small subunit methyltransferase J (250 aa).

S-adenosyl-L-methionine contacts are provided by residues 96–97 (RD) and Asp-168.

It belongs to the methyltransferase superfamily. RsmJ family.

It is found in the cytoplasm. The catalysed reaction is guanosine(1516) in 16S rRNA + S-adenosyl-L-methionine = N(2)-methylguanosine(1516) in 16S rRNA + S-adenosyl-L-homocysteine + H(+). Specifically methylates the guanosine in position 1516 of 16S rRNA. The protein is Ribosomal RNA small subunit methyltransferase J of Neisseria gonorrhoeae (strain NCCP11945).